Reading from the N-terminus, the 1613-residue chain is NAD-specific glutamate dehydrogenase (1613 aa).

Residue Lys-849 is part of the active site.

The protein belongs to the Glu/Leu/Phe/Val dehydrogenases family.

It carries out the reaction L-glutamate + NAD(+) + H2O = 2-oxoglutarate + NH4(+) + NADH + H(+). In terms of biological role, involved in arginine catabolism by converting L-glutamate, into 2-oxoglutarate, which is then channeled into the tricarboxylic acid cycle. The protein is NAD-specific glutamate dehydrogenase of Halomonas elongata (strain ATCC 33173 / DSM 2581 / NBRC 15536 / NCIMB 2198 / 1H9).